The sequence spans 139 residues: Transcription antitermination protein NusB (139 aa).

This sequence belongs to the NusB family.

Its function is as follows. Involved in transcription antitermination. Required for transcription of ribosomal RNA (rRNA) genes. Binds specifically to the boxA antiterminator sequence of the ribosomal RNA (rrn) operons. The polypeptide is Transcription antitermination protein NusB (Rubrobacter xylanophilus (strain DSM 9941 / JCM 11954 / NBRC 16129 / PRD-1)).